We begin with the raw amino-acid sequence, 188 residues long: Putative manganese efflux pump MntP (188 aa).

6 consecutive transmembrane segments (helical) span residues Ile-3–Gly-23, Leu-41–Ala-61, Leu-66–Ile-86, Leu-107–Leu-129, Ala-143–Gly-163, and Ile-168–Gly-188.

The protein belongs to the MntP (TC 9.B.29) family.

The protein resides in the cell inner membrane. Functionally, probably functions as a manganese efflux pump. The sequence is that of Putative manganese efflux pump MntP from Citrobacter koseri (strain ATCC BAA-895 / CDC 4225-83 / SGSC4696).